The chain runs to 246 residues: Glucosamine-6-phosphate deaminase (246 aa).

D67 serves as the catalytic Proton acceptor; for enolization step. The active-site For ring-opening step is the N136. The Proton acceptor; for ring-opening step role is filled by H138. E143 acts as the For ring-opening step in catalysis.

It belongs to the glucosamine/galactosamine-6-phosphate isomerase family. NagB subfamily.

It carries out the reaction alpha-D-glucosamine 6-phosphate + H2O = beta-D-fructose 6-phosphate + NH4(+). It functions in the pathway amino-sugar metabolism; N-acetylneuraminate degradation; D-fructose 6-phosphate from N-acetylneuraminate: step 5/5. Its function is as follows. Catalyzes the reversible isomerization-deamination of glucosamine 6-phosphate (GlcN6P) to form fructose 6-phosphate (Fru6P) and ammonium ion. The protein is Glucosamine-6-phosphate deaminase of Halalkalibacterium halodurans (strain ATCC BAA-125 / DSM 18197 / FERM 7344 / JCM 9153 / C-125) (Bacillus halodurans).